Reading from the N-terminus, the 459-residue chain is Chromosomal replication initiator protein DnaA (459 aa).

Positions 1–90 (MAVSLWQQCI…RPASKPAAPA (90 aa)) are domain I, interacts with DnaA modulators. The disordered stretch occupies residues 75–124 (RFDIGSRPASKPAAPAASTKSPVAPAAKSPSKPSFNSNEPAATANHRSNM). Residues 80–108 (SRPASKPAAPAASTKSPVAPAAKSPSKPS) are compositionally biased toward low complexity. The segment at 91-122 (ASTKSPVAPAAKSPSKPSFNSNEPAATANHRS) is domain II. The span at 109 to 124 (FNSNEPAATANHRSNM) shows a compositional bias: polar residues. A domain III, AAA+ region region spans residues 123–339 (NMNPTYQFDN…GALNRVIANA (217 aa)). ATP contacts are provided by Gly-167, Gly-169, Lys-170, and Thr-171. The segment at 340 to 459 (NFTGRPITID…YANLIRTLSS (120 aa)) is domain IV, binds dsDNA.

This sequence belongs to the DnaA family. In terms of assembly, oligomerizes as a right-handed, spiral filament on DNA at oriC.

The protein localises to the cytoplasm. In terms of biological role, plays an essential role in the initiation and regulation of chromosomal replication. ATP-DnaA binds to the origin of replication (oriC) to initiate formation of the DNA replication initiation complex once per cell cycle. Binds the DnaA box (a 9 base pair repeat at the origin) and separates the double-stranded (ds)DNA. Forms a right-handed helical filament on oriC DNA; dsDNA binds to the exterior of the filament while single-stranded (ss)DNA is stabiized in the filament's interior. The ATP-DnaA-oriC complex binds and stabilizes one strand of the AT-rich DNA unwinding element (DUE), permitting loading of DNA polymerase. After initiation quickly degrades to an ADP-DnaA complex that is not apt for DNA replication. Binds acidic phospholipids. The chain is Chromosomal replication initiator protein DnaA from Shewanella loihica (strain ATCC BAA-1088 / PV-4).